Here is a 375-residue protein sequence, read N- to C-terminus: Alcohol dehydrogenase 1 (375 aa).

N-acetylserine is present on serine 2. The Zn(2+) site is built by cysteine 47, histidine 68, cysteine 98, cysteine 101, cysteine 104, cysteine 112, and cysteine 175. NAD(+)-binding positions include 200–205 (WSGRVG), aspartate 224, and lysine 229. Position 234 is an N6-succinyllysine (lysine 234). NAD(+) is bound at residue 293–295 (VGV). Lysine 340 is subject to N6-succinyllysine. Arginine 370 is a binding site for NAD(+).

This sequence belongs to the zinc-containing alcohol dehydrogenase family. Class-I subfamily. As to quaternary structure, homodimer. Requires Zn(2+) as cofactor.

It is found in the cytoplasm. It carries out the reaction a primary alcohol + NAD(+) = an aldehyde + NADH + H(+). The catalysed reaction is a secondary alcohol + NAD(+) = a ketone + NADH + H(+). This is Alcohol dehydrogenase 1 (ADH1) from Geomys attwateri (Attwater's pocket gopher).